Consider the following 663-residue polypeptide: Transmembrane 9 superfamily member 2 (663 aa).

Residues 1 to 28 (MSARLPVLSPPRWPRLLLLSLLLLGAVP) form the signal peptide. The Lumenal segment spans residues 29–300 (GPRRSGAFYL…LESMPHTHIQ (272 aa)). Residues 301 to 321 (WFSIMNSLVIVLFLSGMVAMI) form a helical membrane-spanning segment. Over 322-374 (MLRTLHKDIARYNQMDSTEDAQEEFGWKLVHGDIFRPPRKGMLLSVFLGSGTQ) the chain is Cytoplasmic. Residues 375-395 (ILIMTFVTLFFACLGFLSPAN) traverse the membrane as a helical segment. Residues 396–398 (RGA) lie on the Lumenal side of the membrane. Residues 399–419 (LMTCAVVLWVLLGTPAGYVAA) form a helical membrane-spanning segment. At 420–437 (RFYKSFGGEKWKTNVLLT) the chain is on the cytoplasmic side. A helical membrane pass occupies residues 438–458 (SFLCPGIVFADFFIMNLILWG). The Lumenal portion of the chain corresponds to 459–466 (EGSSAAIP). Residues 467–487 (FGTLVAILALWFCISVPLTFI) form a helical membrane-spanning segment. The Cytoplasmic portion of the chain corresponds to 488–522 (GAYFGFKKNAIEHPVRTNQIPRQIPEQSFYTKPLP). Residues 523–543 (GIIMGGILPFGCIFIQLFFIL) form a helical membrane-spanning segment. Topologically, residues 544 to 554 (NSIWSHQMYYM) are lumenal. A helical membrane pass occupies residues 555–575 (FGFLFLVFIILVITCSEATIL). The Cytoplasmic portion of the chain corresponds to 576-591 (LCYFHLCAEDYHWQWR). Residues 592–612 (SFLTSGFTAVYFLIYAVHYFF) traverse the membrane as a helical segment. Residues 613 to 631 (SKLQITGTASTILYFGYTM) are Lumenal-facing. A helical transmembrane segment spans residues 632–652 (IMVLIFFLFTGTIGFFACFWF). Over 653-663 (VTKIYSVVKVD) the chain is Cytoplasmic.

The protein belongs to the nonaspanin (TM9SF) (TC 9.A.2) family. Ubiquitously expressed. Especially abundant in pancreas, highly expressed in kidney, lower levels in heart, brain, skeletal muscle and placenta. Lowest expression in lung and liver.

It localises to the endosome membrane. The protein resides in the golgi outpost. The protein localises to the cytoplasm. It is found in the cytoskeleton. Its subcellular location is the microtubule organizing center. In terms of biological role, in the intracellular compartments, may function as a channel or small molecule transporter. The protein is Transmembrane 9 superfamily member 2 (TM9SF2) of Homo sapiens (Human).